The primary structure comprises 358 residues: Protein RecA 2 (358 aa).

Residue 69-76 coordinates ATP; the sequence is GPESSGKT. Residues 331–358 form a disordered region; it reads GIGKSGAPSPRRRTSPRRPKVAARSAAV. Residues 340-351 show a composition bias toward basic residues; it reads PRRRTSPRRPKV.

Belongs to the RecA family.

The protein localises to the cytoplasm. Functionally, can catalyze the hydrolysis of ATP in the presence of single-stranded DNA, the ATP-dependent uptake of single-stranded DNA by duplex DNA, and the ATP-dependent hybridization of homologous single-stranded DNAs. It interacts with LexA causing its activation and leading to its autocatalytic cleavage. The polypeptide is Protein RecA 2 (Myxococcus xanthus).